The chain runs to 360 residues: Peptide chain release factor 1 (360 aa).

Gln235 is modified (N5-methylglutamine). Basic and acidic residues predominate over residues 285 to 308; it reads KRQEAEASERRNLLGSGDRSDRNR. The interval 285 to 313 is disordered; sequence KRQEAEASERRNLLGSGDRSDRNRTYNFP.

This sequence belongs to the prokaryotic/mitochondrial release factor family. Methylated by PrmC. Methylation increases the termination efficiency of RF1.

It localises to the cytoplasm. Peptide chain release factor 1 directs the termination of translation in response to the peptide chain termination codons UAG and UAA. This Photorhabdus laumondii subsp. laumondii (strain DSM 15139 / CIP 105565 / TT01) (Photorhabdus luminescens subsp. laumondii) protein is Peptide chain release factor 1.